The sequence spans 713 residues: RNA-binding protein vts1 (713 aa).

A compositionally biased stretch (low complexity) spans 154–188 (NSGLSLDKSLPSSPKGDSPSLSSSLPSLTTKSNLS). Disordered stretches follow at residues 154-208 (NSGL…SSKH), 254-336 (EPPA…RDRG), 356-389 (DESS…SRPL), 554-596 (EKIE…GNEL), and 667-713 (KAAK…SSMD). 2 stretches are compositionally biased toward polar residues: residues 189–208 (GNLN…SSKH) and 258–281 (SSAS…NANV). Composition is skewed to low complexity over residues 282 to 297 (TSSL…SKTT) and 304 to 320 (SKKS…PNTS). The segment covering 321 to 330 (FFETPHNNIW) has biased composition (polar residues). Residues 369–378 (SPPPPPPPPE) are compositionally biased toward pro residues. The span at 559-569 (PPNNSKNQTYR) shows a compositional bias: polar residues. Residues 570–583 (RSSRGSNKTRKSIS) show a composition bias toward basic residues. Residues 595–656 (ELPQDIPSWL…LKSFQEVAPL (62 aa)) enclose the SAM domain. Residues 670-681 (KNQSSESLTSFK) are compositionally biased toward polar residues. S673 carries the post-translational modification Phosphoserine. The span at 691–702 (SGSMSNEISSNS) shows a compositional bias: low complexity. Positions 703-713 (TKQDVSSSSMD) are enriched in polar residues.

Belongs to the VTS1 family. In terms of assembly, monomer. Binds to RNA.

It localises to the cytoplasm. Its subcellular location is the cytosol. The protein resides in the P-body. Its function is as follows. RNA-binding protein involved in post-transcriptional regulation through transcript degradation. The protein is RNA-binding protein vts1 of Schizosaccharomyces pombe (strain 972 / ATCC 24843) (Fission yeast).